Here is a 103-residue protein sequence, read N- to C-terminus: Small ribosomal subunit protein uS10c (103 aa).

This sequence belongs to the universal ribosomal protein uS10 family. As to quaternary structure, part of the 30S ribosomal subunit.

The protein resides in the plastid. It localises to the chloroplast. Functionally, involved in the binding of tRNA to the ribosomes. The protein is Small ribosomal subunit protein uS10c of Emiliania huxleyi (Coccolithophore).